The following is a 163-amino-acid chain: MKGSLSHELEVSLPADQLWQVYSTLRLAQLSAELLPTVISKVEVEEGDGGVGTLLRVTYALGIPGMKYHKERFVKIDHEKRLKEALFVEGGHLDLGFSSYLIRLEILEKGHNSSVIKSTVEYEVDEEHAANASFATTDPFMIIGGAVSEHLLQKKSNCSIMLL.

68-71 is a tyramine binding site; that stretch reads YHKE. K83 (proton donor) is an active-site residue.

It belongs to the BetVI family. In terms of tissue distribution, mostly expressed in bulbs, and, to a lower extent, in roots, stems, leaves and flowers.

The enzyme catalyses 3,4-dihydroxybenzaldehyde + tyramine + AH2 = norbelladine + A + H2O. It functions in the pathway alkaloid biosynthesis. Its function is as follows. Catalyzes the condensation of tyramine and 3,4-dihydroxybenzaldehyde (3,4-DHBA) to form norbelladine, the common precursor to all Amaryllidaceae alkaloids such as galanthamine, lycorine and haemanthamine, and including haemanthamine- and crinamine-type alkaloids, promising anticancer agents. The chain is Norbelladine synthase from Narcissus pseudonarcissus (Daffodil).